Reading from the N-terminus, the 161-residue chain is MPAPAEVQAATLQRFLAAWQKWDAQEWLDGFADDFTQITLPLSLGIPSRSRAEVEQVLPALVATVKSYQLTIRTVVHDPERNKAAVYALSTGTLPWGPWELEYSVFITFSEAGDQVAVLEEMMDSAFLQEFGPKFGQYLQANGGPRAVAAGVGAGGATAVH.

It belongs to the avfA family.

The protein operates within secondary metabolite biosynthesis. Its function is as follows. Monooxygenase; part of the gene cluster that mediates the biosynthesis of agnestins, dihydroxy-xanthone metabolites. The pathway begins with the assembly and cyclization of atrochrysone thioester by the non-reducing polyketide synthase Agnpks1. The atrochrysone carboxyl ACP thioesterase AgnL7 then breaks the thioester bond and releases the atrochrysone carboxylic acid as the first enzyme-free intermediate. The decarboxylase AgnL1 then catalyzes the concerted decarboxylation-elimination required to convert atochrysone carboxylic acid into emodin anthrone, which is further oxidized to emodin by the anthrone oxygenase AgnL2. Emodin then undergoes reduction catalyzed by the oxidoreductase AgnL4 to yield the dihydroquinone tautomer which is the substrate for reduction by the short chain dehydrogenase AgnL6 reduction to produce hydroxyketone, followed by AgnL8 dehydration and likely spontaneous autoxidation to chrysophanol. Baeyer-Villiger oxidation by the oxidase AgnL3 leads to monodictyphenone via cleavage of the C-10/C-10a bond of chrysophanol. Alternative cleavage at the C-4a/C-10 bond of chrysophanol also leads to the formation some cephalone F. Further conversion to agnestins A and B, requires reduction to dihydro-monodictyphenone, oxidation to agnestin C probably via an epoxide, and rearrangement to either agnestin A or agnestin B directly, although agnestin A or agnestin B can also interconvert. Within the cluster, AgnR1 is the only unassigned oxidoreductase present which could be involved in this conversion. However, AgnR1 seems not to be involved in this step, and thus genes involved in the proposed oxidation/reduction may be located elsewhere on the genome. Further agnestin A derivatives are probably formed by spontaneous decarboxylations, dehydrations and methanolysis reactions. The protein is Monooxygenase AgnL5 of Paecilomyces divaricatus (Penicillium divaricatum).